An 874-amino-acid chain; its full sequence is Alanine--tRNA ligase (874 aa).

4 residues coordinate Zn(2+): His-562, His-566, Cys-665, and His-669.

The protein belongs to the class-II aminoacyl-tRNA synthetase family. It depends on Zn(2+) as a cofactor.

The protein resides in the cytoplasm. The enzyme catalyses tRNA(Ala) + L-alanine + ATP = L-alanyl-tRNA(Ala) + AMP + diphosphate. In terms of biological role, catalyzes the attachment of alanine to tRNA(Ala) in a two-step reaction: alanine is first activated by ATP to form Ala-AMP and then transferred to the acceptor end of tRNA(Ala). Also edits incorrectly charged Ser-tRNA(Ala) and Gly-tRNA(Ala) via its editing domain. The protein is Alanine--tRNA ligase of Pseudomonas putida (strain GB-1).